The primary structure comprises 393 residues: Na(+)/H(+) antiporter NhaA 2 (393 aa).

11 helical membrane passes run serine 18–leucine 38, leucine 53–leucine 73, isoleucine 91–phenylalanine 111, glycine 120–glycine 140, valine 149–phenylalanine 169, threonine 172–leucine 192, leucine 208–leucine 228, phenylalanine 263–methionine 283, valine 294–valine 314, glycine 332–phenylalanine 352, and isoleucine 363–serine 383.

It belongs to the NhaA Na(+)/H(+) (TC 2.A.33) antiporter family.

It is found in the cell inner membrane. The catalysed reaction is Na(+)(in) + 2 H(+)(out) = Na(+)(out) + 2 H(+)(in). Na(+)/H(+) antiporter that extrudes sodium in exchange for external protons. This Brucella anthropi (strain ATCC 49188 / DSM 6882 / CCUG 24695 / JCM 21032 / LMG 3331 / NBRC 15819 / NCTC 12168 / Alc 37) (Ochrobactrum anthropi) protein is Na(+)/H(+) antiporter NhaA 2.